We begin with the raw amino-acid sequence, 123 residues long: Small ribosomal subunit protein uS12cz/uS12cy (123 aa).

The protein belongs to the universal ribosomal protein uS12 family. Part of the 30S ribosomal subunit.

Its subcellular location is the plastid. It is found in the chloroplast. In terms of biological role, with S4 and S5 plays an important role in translational accuracy. Located at the interface of the 30S and 50S subunits. The polypeptide is Small ribosomal subunit protein uS12cz/uS12cy (rps12-A) (Coffea arabica (Arabian coffee)).